Reading from the N-terminus, the 203-residue chain is Outer-membrane lipoprotein carrier protein (203 aa).

An N-terminal signal peptide occupies residues 1 to 21; that stretch reads MKKLLVACCLLSGFASTSVLA.

This sequence belongs to the LolA family. Monomer.

The protein localises to the periplasm. Participates in the translocation of lipoproteins from the inner membrane to the outer membrane. Only forms a complex with a lipoprotein if the residue after the N-terminal Cys is not an aspartate (The Asp acts as a targeting signal to indicate that the lipoprotein should stay in the inner membrane). In Serratia proteamaculans (strain 568), this protein is Outer-membrane lipoprotein carrier protein.